The primary structure comprises 288 residues: Syntaxin-1A (288 aa).

At 1-265 the chain is on the cytoplasmic side; it reads MKDRTQELRT…KYQSKARRKK (265 aa). Phosphoserine is present on residues serine 14, serine 64, and serine 95. Residues 68–109 adopt a coiled-coil conformation; it reads DEKTKEELEELMSDIKKTANKVRSKLKSIEQSIEQEEGLNRS. Residue serine 188 is modified to Phosphoserine; by DAPK1. Residues 192–254 enclose the t-SNARE coiled-coil homology domain; it reads LSEIETRHSE…ERAVSDTKKA (63 aa). Glycyl lysine isopeptide (Lys-Gly) (interchain with G-Cter in SUMO) cross-links involve residues lysine 252, lysine 253, and lysine 256. The chain crosses the membrane as a helical; Anchor for type IV membrane protein span at residues 266–286; it reads IMIIICCVILGIVIASTVGGI. The Extracellular portion of the chain corresponds to 287-288; the sequence is FA.

Belongs to the syntaxin family. As to quaternary structure, part of the SNARE core complex containing SNAP25, VAMP2 and STX1A; this complex constitutes the basic catalytic machinery of the complex neurotransmitter release apparatus. The SNARE complex interacts with CPLX1. Interacts with STXBP1. The interaction with STXBP1 promotes assembly of the SNARE complex. Interacts (via C-terminus) with KCNB1 (via C-terminus); the interaction increases in a calcium-dependent manner and induces a pore-independent enhancement of exocytosis in neuroendocrine cells, chromaffin cells, pancreatic beta cells and from the soma of dorsal root ganglia (DRG) neurons. Interacts with SYTL4. Interacts with STXBP6. Interacts with PLCL1 (via C2 domain). Interacts with OTOF. Interacts with LGI3. Interacts (via the H3 domain) with SLC6A4 (via the N-terminus); this interaction regulates SLC4A6 channel conductance in thalamocortical neurons. Interacts with SYT6 and SYT8; the interaction is Ca(2+)-dependent. Interacts with VAMP8. Interacts with SNAP23. Interacts with VAPA and SYBU. Interacts with PRRT2. Interacts with SEPT8. Interacts with STXBP5L. Interacts with synaptotagmin-1/SYT1. Interacts with SEPTIN5; in the cerebellar cortex. Interacts with SEPTIN4; in the striatum. In terms of processing, phosphorylated by CK2. Phosphorylation at Ser-188 by DAPK1 significantly decreases its interaction with STXBP1. Post-translationally, sumoylated, sumoylation is required for regulation of synaptic vesicle endocytosis. Highly expressed in embryonic spinal cord and ganglia and in adult cerebellum and cerebral cortex. In terms of tissue distribution, expressed in heart, liver, fat, skeletal muscle, kidney and brain.

It localises to the cytoplasmic vesicle. The protein localises to the secretory vesicle. It is found in the synaptic vesicle membrane. The protein resides in the synapse. Its subcellular location is the synaptosome. It localises to the cell membrane. The protein localises to the secreted. Functionally, plays an essential role in hormone and neurotransmitter calcium-dependent exocytosis and endocytosis. Part of the SNARE (Soluble NSF Attachment Receptor) complex composed of SNAP25, STX1A and VAMP2 which mediates the fusion of synaptic vesicles with the presynaptic plasma membrane. STX1A and SNAP25 are localized on the plasma membrane while VAMP2 resides in synaptic vesicles. The pairing of the three SNAREs from the N-terminal SNARE motifs to the C-terminal anchors leads to the formation of the SNARE complex, which brings membranes into close proximity and results in final fusion. Participates in the calcium-dependent regulation of acrosomal exocytosis in sperm. Also plays an important role in the exocytosis of hormones such as insulin or glucagon-like peptide 1 (GLP-1). The sequence is that of Syntaxin-1A (STX1A) from Homo sapiens (Human).